The primary structure comprises 422 residues: Immunoglobulin mu Fc receptor (422 aa).

The N-terminal stretch at 1–16 is a signal peptide; the sequence is MDFWLWLLYFLPVSGA. At 18 to 262 the chain is on the extracellular side; that stretch reads RVLPEVQLNV…DRGLHIPIPE (245 aa). An Ig-like domain is found at 24-121; sequence QLNVEWGGSI…GKTQKITLNV (98 aa). 2 disulfides stabilise this stretch: cysteine 37-cysteine 103 and cysteine 49-cysteine 58. Threonine 91 carries the post-translational modification Phosphothreonine. The chain crosses the membrane as a helical span at residues 263-283; it reads FHILIPTFLGFLLLVLLGLVV. The Cytoplasmic portion of the chain corresponds to 284–422; it reads KRAIQRRRAS…YAPGPRSSCP (139 aa). The segment covering 290–308 has biased composition (basic residues); the sequence is RRASSRRAGRLAMRRRGRG. 2 disordered regions span residues 290–367 and 391–422; these read RRAS…QVLE and VNLE…SSCP. Positions 344–363 are enriched in low complexity; sequence LGPAEAPLLNAPASASPASP.

Interacts (via Ig-like domain) with IGHM (via CH4/Cmu4 domain), both secreted and membrane-bound IgM; the interaction is glycan-independent and multivalent theoretically involving up to eight binding sites for the IgM pentamer. In terms of processing, phosphorylated on both Tyr and Ser residues. Post-translationally, O-glycosylated. Sialylated. O-linked glycans regulate trafficking to the plasma membrane. In terms of tissue distribution, expressed in pre-B cells, immature and mature B cells residing in primary and secondary lymphoid organs (at protein level). In the spleen, highly expressed in follicular and marginal zone B cells and at lower levels in germinal center B cells and plasma cells. Expressed in splenic dendritic cells and in granulocytes. In the peritoneum, expressed in B1-a and B-2 cell lineages. In the bone marrow, expressed in immature B cells and at a lower level in pro- and pre-B cells (at protein level). Expressed in M cells (at protein level).

It localises to the cell membrane. It is found in the early endosome membrane. Its subcellular location is the golgi apparatus. The protein localises to the trans-Golgi network membrane. The protein resides in the lysosome membrane. High-affinity Fc receptor for immunoglobulin M (IgM), both secreted and membrane-bound IgM. Primarily regulates IgM transport and homeostasis. In lymphoid cells, enables exocytosis of membrane-bound IgM on the plasma membrane as well as endocytosis of IgM-antigen complexes toward lysosomes for degradation. In mucosal epithelium, mediates retrotranscytosis of antigen-IgM complexes across mucosal M cells toward antigen-presenting cells in mucosal lymphoid tissues. Triggers costimulatory signaling and mediates most of IgM effector functions involved in B cell development and primary immune response to infection. Likely limits tonic IgM BCR signaling to self-antigens for proper negative selection of autoreactive B cells in the bone marrow and for the maintenance of regulatory B cell pool in peripheral lymphoid organs. Mediates antibody responses to T cell-dependent and T cell-independent antigens and promotes induction of an efficient neutralizing IgG response. Engages in cross-talk with antigen-receptor signaling via the non-canonical NF-kappa-B, MAP kinases and calcium signaling pathways. The chain is Immunoglobulin mu Fc receptor from Mus musculus (Mouse).